A 302-amino-acid chain; its full sequence is MITILGPTACGKTRLAVSLAYRLGTEIISADSRQIYRGMDIGTGKDLADYQVGGTTIPCHLIDIRPAGDKYNLFAYQHDFHQAYASILARGMDPILCGGTGMYIEAVLKGYHLPDVPPNPTLRDRLQGKSLTELTLILAAYGPLHNKTDVDSAQRAIRAIEIAEYIKNNPAESTEFPPIDSLIIGLDLDRDTRRKRITDRLHARMHEGMIEEVKGLLDSGIPADDLIYYGLEYKFVTLYLTGQTDYESMFTGLETAIHQFAKRQMTWFRGMERRGFLIHWIDALLPADEQCEAVMKLYTANG.

6-13 is an ATP binding site; it reads GPTACGKT. 8-13 serves as a coordination point for substrate; the sequence is TACGKT. 2 interaction with substrate tRNA regions span residues 31 to 34 and 154 to 158; these read DSRQ and QRAIR.

This sequence belongs to the IPP transferase family. As to quaternary structure, monomer. Mg(2+) is required as a cofactor.

The enzyme catalyses adenosine(37) in tRNA + dimethylallyl diphosphate = N(6)-dimethylallyladenosine(37) in tRNA + diphosphate. In terms of biological role, catalyzes the transfer of a dimethylallyl group onto the adenine at position 37 in tRNAs that read codons beginning with uridine, leading to the formation of N6-(dimethylallyl)adenosine (i(6)A). The polypeptide is tRNA dimethylallyltransferase 1 (Porphyromonas gingivalis (strain ATCC 33277 / DSM 20709 / CIP 103683 / JCM 12257 / NCTC 11834 / 2561)).